The sequence spans 153 residues: Insulin-like growth factor 1 (153 aa).

The segment at 49–77 (GPETLCGAELVDALQFVCGDRGFYFNKPT) is b. 3 disulfides stabilise this stretch: cysteine 54/cysteine 96, cysteine 66/cysteine 109, and cysteine 95/cysteine 100. The c stretch occupies residues 78–89 (GYGSSSRRAPQT). Residues 90-110 (GIVDECCFRSCDLRRLEMYCA) are a. The tract at residues 111–118 (PLKPAKSA) is d. Positions 119-153 (RSVRAQRHTDMPKAQKEVHLKNASRGSAGNKNYRM) are cleaved as a propeptide — e peptide. The tract at residues 120–153 (SVRAQRHTDMPKAQKEVHLKNASRGSAGNKNYRM) is disordered. Basic and acidic residues predominate over residues 125-138 (RHTDMPKAQKEVHL). The span at 142–153 (SRGSAGNKNYRM) shows a compositional bias: polar residues.

The protein belongs to the insulin family. In terms of assembly, forms a ternary complex with IGFR1 and ITGAV:ITGB3. Forms a ternary complex with IGFR1 and ITGA6:ITGB4. Forms a ternary complex with IGFBP3 and ALS.

Its subcellular location is the secreted. In terms of biological role, the insulin-like growth factors, isolated from plasma, are structurally and functionally related to insulin but have a much higher growth-promoting activity. May be a physiological regulator of [1-14C]-2-deoxy-D-glucose (2DG) transport and glycogen synthesis in osteoblasts. Stimulates glucose transport in bone-derived osteoblastic (PyMS) cells and is effective at much lower concentrations than insulin, not only regarding glycogen and DNA synthesis but also with regard to enhancing glucose uptake. May play a role in synapse maturation. Ca(2+)-dependent exocytosis of IGF1 is required for sensory perception of smell in the olfactory bulb. Acts as a ligand for IGF1R. Binds to the alpha subunit of IGF1R, leading to the activation of the intrinsic tyrosine kinase activity which autophosphorylates tyrosine residues in the beta subunit thus initiating a cascade of down-stream signaling events leading to activation of the PI3K-AKT/PKB and the Ras-MAPK pathways. Binds to integrins ITGAV:ITGB3 and ITGA6:ITGB4. Its binding to integrins and subsequent ternary complex formation with integrins and IGFR1 are essential for IGF1 signaling. Induces the phosphorylation and activation of IGFR1, MAPK3/ERK1, MAPK1/ERK2 and AKT1. As part of the MAPK/ERK signaling pathway, acts as a negative regulator of apoptosis in cardiomyocytes via promotion of STUB1/CHIP-mediated ubiquitination and degradation of ICER-type isoforms of CREM. This chain is Insulin-like growth factor 1, found in Ailuropoda melanoleuca (Giant panda).